We begin with the raw amino-acid sequence, 511 residues long: Exodeoxyribonuclease 7 large subunit (511 aa).

Belongs to the XseA family. Heterooligomer composed of large and small subunits.

The protein localises to the cytoplasm. It carries out the reaction Exonucleolytic cleavage in either 5'- to 3'- or 3'- to 5'-direction to yield nucleoside 5'-phosphates.. Its function is as follows. Bidirectionally degrades single-stranded DNA into large acid-insoluble oligonucleotides, which are then degraded further into small acid-soluble oligonucleotides. In Brucella melitensis biotype 1 (strain ATCC 23456 / CCUG 17765 / NCTC 10094 / 16M), this protein is Exodeoxyribonuclease 7 large subunit.